Reading from the N-terminus, the 250-residue chain is Proteasome subunit alpha type-7-A (250 aa).

Lysine 62 is covalently cross-linked (Glycyl lysine isopeptide (Lys-Gly) (interchain with G-Cter in ubiquitin)).

This sequence belongs to the peptidase T1A family. In terms of assembly, component of the 20S core complex of the 26S proteasome. The 26S proteasome is composed of a core protease (CP), known as the 20S proteasome, capped at one or both ends by the 19S regulatory particle (RP/PA700). The 20S proteasome core is composed of 28 subunits that are arranged in four stacked rings, resulting in a barrel-shaped structure. The two end rings are each formed by seven alpha subunits, and the two central rings are each formed by seven beta subunits. The catalytic chamber with the active sites is on the inside of the barrel. Interacts with KIN10 and KIN11 SnRK subunits, and with the SKP1A/ASK1 subunit of the SCF E3 ubiquitin ligase complex. In terms of tissue distribution, expressed in roots, leaves and flowers.

The protein resides in the cytoplasm. The protein localises to the nucleus. The proteasome is a multicatalytic proteinase complex which is characterized by its ability to cleave peptides with Arg, Phe, Tyr, Leu, and Glu adjacent to the leaving group at neutral or slightly basic pH. The proteasome has an ATP-dependent proteolytic activity. Mediates the association of the SCF(TIR1) E3 ubiquitin ligase complex with the proteasome. This is Proteasome subunit alpha type-7-A (PAD1) from Arabidopsis thaliana (Mouse-ear cress).